The following is a 79-amino-acid chain: MSVKKSPEELKKIFEKYAAKEGDPDQLSKEELKLLIQNELPALLKGSSSIDDLFKELDKNGDGEVSFEEFQVLVKKISQ.

At serine 2 the chain carries N-acetylserine. 2 consecutive EF-hand domains span residues 13-48 (IFEK…KGSS) and 45-79 (KGSS…KISQ). The Ca(2+) site is built by glutamine 26 and glutamate 31. Serine 47 is subject to Phosphoserine. Residues aspartate 58, asparagine 60, aspartate 62, glutamate 64, and glutamate 69 each contribute to the Ca(2+) site.

The protein belongs to the S-100 family.

The polypeptide is Protein S100-G (S100G) (Equus caballus (Horse)).